A 428-amino-acid polypeptide reads, in one-letter code: Serine hydroxymethyltransferase (428 aa).

G120–I122 lines the (6S)-5,6,7,8-tetrahydrofolate pocket. The residue at position 226 (K226) is an N6-(pyridoxal phosphate)lysine.

This sequence belongs to the SHMT family. In terms of assembly, homodimer. Pyridoxal 5'-phosphate serves as cofactor.

It localises to the cytoplasm. It catalyses the reaction 5,10-methylenetetrahydromethanopterin + glycine + H2O = 5,6,7,8-tetrahydromethanopterin + L-serine. Its pathway is amino-acid biosynthesis; glycine biosynthesis; glycine from L-serine: step 1/1. Catalyzes the reversible interconversion of serine and glycine with tetrahydromethanopterin (H4MPT) serving as the one-carbon carrier. Also exhibits a pteridine-independent aldolase activity toward beta-hydroxyamino acids, producing glycine and aldehydes, via a retro-aldol mechanism. The chain is Serine hydroxymethyltransferase from Methanopyrus kandleri (strain AV19 / DSM 6324 / JCM 9639 / NBRC 100938).